A 436-amino-acid chain; its full sequence is MTATWEKKEGNEGVLSVTVPAEKVDKAIDQAFKKVVKQINVPGFRKGKVPRPIFEQRFGVEALYQDAVDILLPEAYGEAIDETGIKPVDQPEINVTSIEKGKEMTFEANVVVEPEVQLGDYKGLEVEKQDVELTDEELQESIDHQLGHLAEMVVKEDGAIENGDTVNIDFDGYVDGEQFEGGQAEGYDLEIGSGSFIPGFEEQLVGVKTGEEKDVNVTFPEEYHAEELAGKEATFKTKVNEIKYKDVPELTDEIANELDSEANTVDEYKENLRKRLTEQKETDAENNQKEEAINKAANNASIDVPDAMINTELDRMVQEFGQRMQQQGLNLETYFQISGQDESQLREQMKDDAEERVKTNLTLTAIADAEDIEVSDDDIDKELEKMSEQFNISVEDIKQTLGNTDIVKNDVRIQKVIDLLVDEAKLVEPSKDDSEA.

One can recognise a PPIase FKBP-type domain in the interval Gly-163–Pro-248.

This sequence belongs to the FKBP-type PPIase family. Tig subfamily.

The protein localises to the cytoplasm. It carries out the reaction [protein]-peptidylproline (omega=180) = [protein]-peptidylproline (omega=0). Its function is as follows. Involved in protein export. Acts as a chaperone by maintaining the newly synthesized protein in an open conformation. Functions as a peptidyl-prolyl cis-trans isomerase. In Staphylococcus saprophyticus subsp. saprophyticus (strain ATCC 15305 / DSM 20229 / NCIMB 8711 / NCTC 7292 / S-41), this protein is Trigger factor.